A 494-amino-acid polypeptide reads, in one-letter code: Glutamyl-tRNA reductase (494 aa).

Substrate contacts are provided by residues 58–61 (TCNR), S118, 123–125 (EQQ), and Q129. The active-site Nucleophile is C59. Residue 205–210 (GAGAMA) coordinates NADP(+). The disordered stretch occupies residues 448–494 (KGANAGSGQRKKQKPQENRVSTARAVYRSTYQDLTQASTPGGKDDDQ). Residues 476–486 (STYQDLTQAST) show a composition bias toward polar residues.

Belongs to the glutamyl-tRNA reductase family. Homodimer.

It catalyses the reaction (S)-4-amino-5-oxopentanoate + tRNA(Glu) + NADP(+) = L-glutamyl-tRNA(Glu) + NADPH + H(+). It functions in the pathway porphyrin-containing compound metabolism; protoporphyrin-IX biosynthesis; 5-aminolevulinate from L-glutamyl-tRNA(Glu): step 1/2. In terms of biological role, catalyzes the NADPH-dependent reduction of glutamyl-tRNA(Glu) to glutamate 1-semialdehyde (GSA). The protein is Glutamyl-tRNA reductase of Corynebacterium urealyticum (strain ATCC 43042 / DSM 7109).